The following is a 379-amino-acid chain: 2-nitroimidazole nitrohydrolase (379 aa).

Residue Cys357 is the Amidino-cysteine intermediate of the active site.

Belongs to the arginine deiminase family.

The enzyme catalyses 2-nitroimidazole + H2O = 1,3-dihydro-2H-imidazol-2-one + nitrite + H(+). In terms of biological role, involved in the biodegradation of 2-Nitroimidazole (2NI) which is a natural antibiotic and an analog of the synthetic nitroimidazoles used for treatment of tuberculosis, Chagas disease (also called American Trypanosomiasis) and cancer. Catalyzes the hydrolytic denitration of 2NI to produce imidazol-2-one and nitrite. It is also active against the 2NI synthetic derivative benznidazole. NnhA confers drug resistance to 2NI. This Mycobacterium sp. (strain JS330) protein is 2-nitroimidazole nitrohydrolase (nnhA).